Consider the following 304-residue polypeptide: Mas-related G-protein coupled receptor member A (304 aa).

Over 1 to 17 (MDKTIPGSFNSRTLIPN) the chain is Extracellular. Residues 18 to 38 (LLIIISGLVGLIGNAMVFWLL) traverse the membrane as a helical segment. At 39–46 (GFRLARNA) the chain is on the cytoplasmic side. The chain crosses the membrane as a helical span at residues 47 to 67 (FSVYILNLALADFLFLLCHII). Residues 68 to 80 (DSTLLLLKFSYPN) lie on the Extracellular side of the membrane. The helical transmembrane segment at 81-101 (IIFLPCFNTVMMVPYIAGLSM) threads the bilayer. Over 102–132 (LSAISTERCLSVVCPIWYRCRRPKHTSTVMC) the chain is Cytoplasmic. Residues 133–153 (SAIWVLSLLICILNRYFCGFL) form a helical membrane-spanning segment. Topologically, residues 154-167 (DTKYEKDNRCLASN) are extracellular. The chain crosses the membrane as a helical span at residues 168-188 (FFTAACLIFLFVVLCLSSLAL). Residues 189-211 (LVRLFCGAGRMKLTRLYATIMLT) are Cytoplasmic-facing. Residues 212–232 (VLVFLLCGLPFGIHWFLLIWI) traverse the membrane as a helical segment. The Extracellular portion of the chain corresponds to 233–244 (KIDYGKFAYGLY). A helical transmembrane segment spans residues 245-265 (LAALVLTAVNSCANPIIYFFV). The Cytoplasmic segment spans residues 266-304 (GSFRHQKHQTLKMVLQRALQDTPETAENTVEMSSSKVEP).

The protein belongs to the G-protein coupled receptor 1 family. Mas subfamily. Expressed in a subset of IB4-positive small diameter nociceptive dorsal root neurons.

The protein resides in the cell membrane. Orphan receptor activated by a subset of RFamide-family neuropeptides such as FLRF-amide and FMRF-amide. Mediates its action by association with G proteins that activate a phosphatidylinositol-calcium second messenger system. Its effect is mediated by G(q) and G(11) proteins. May regulate the function of nociceptive neurons by modulation of pain perception. This chain is Mas-related G-protein coupled receptor member A (Mrgpra), found in Rattus norvegicus (Rat).